The following is a 943-amino-acid chain: Receptor-like protein 35 (943 aa).

The signal sequence occupies residues 1–31 (MTGSWNPTSIIIPVTLSFLLSFIHNFADVVA). Topologically, residues 32–897 (APTRHLCLPE…EEEDEEEISW (866 aa)) are extracellular. Asparagine 67, asparagine 82, asparagine 118, asparagine 147, asparagine 171, asparagine 195, asparagine 219, and asparagine 222 each carry an N-linked (GlcNAc...) asparagine glycan. LRR repeat units lie at residues 124–148 (LQNL…IGNL), 150–171 (HLTS…SIEN), 172–196 (LSRL…IGNL), 198–220 (HLTS…IGNL), 222–244 (NLTF…IGNL), 245–267 (ARLT…SFGN), 268–292 (LNQL…LLNL), 293–317 (TRLS…SLLS), 319–340 (LMDF…LFNI), 341–364 (PPLI…NISS), and 366–389 (SNLQ…LSRF). Residues asparagine 291 and asparagine 312 are each glycosylated (N-linked (GlcNAc...) asparagine). N-linked (GlcNAc...) asparagine glycans are attached at residues asparagine 354 and asparagine 361. The stretch at 390–414 (VNLTLFDLSHLNTQCRPVDFSIFSH) is one LRR 12; degenerate repeat. The N-linked (GlcNAc...) asparagine glycan is linked to asparagine 391. LRR repeat units lie at residues 415–439 (LKSL…ILPY), 440–463 (FKTL…SVSS), 467–490 (SQSI…LRTQ), 491–514 (HELG…LWTL), 515–537 (PNLF…SKKH), 544–568 (KPSM…ICGL), 569–592 (RSLN…MEKL), 593–617 (KSTL…IFES), 619–639 (RSLD…LIRF), 640–665 (SNLE…SLSK), 667–685 (QVLV…EATF), 686–709 (PELR…YFVK), 753–777 (LTIY…IGLL), 778–801 (KELL…MGNL), 802–825 (TALE…LGDL), and 827–850 (FLAY…QFRR). Asparagine 457 is a glycosylation site (N-linked (GlcNAc...) asparagine). Residues asparagine 521, asparagine 524, asparagine 556, asparagine 582, and asparagine 605 are each glycosylated (N-linked (GlcNAc...) asparagine). N-linked (GlcNAc...) asparagine glycosylation occurs at asparagine 653. N-linked (GlcNAc...) asparagine glycosylation occurs at asparagine 699. Residues asparagine 784 and asparagine 800 are each glycosylated (N-linked (GlcNAc...) asparagine). N-linked (GlcNAc...) asparagine glycosylation is found at asparagine 832, asparagine 852, and asparagine 882. Residues 898-918 (IAAAIGFIPGIVFGLTIGYIL) traverse the membrane as a helical segment. At 919-943 (VSYKPEWFMNPFGRNNRRRRNTTTH) the chain is on the cytoplasmic side.

Belongs to the RLP family.

The protein resides in the cell membrane. The sequence is that of Receptor-like protein 35 from Arabidopsis thaliana (Mouse-ear cress).